Consider the following 178-residue polypeptide: Bifunctional protein PyrR (178 aa).

The PRPP-binding motif lies at 99–111 (VILVDDVLFTGRT).

Belongs to the purine/pyrimidine phosphoribosyltransferase family. PyrR subfamily. Homodimer and homohexamer; in equilibrium.

The enzyme catalyses UMP + diphosphate = 5-phospho-alpha-D-ribose 1-diphosphate + uracil. In terms of biological role, regulates transcriptional attenuation of the pyrimidine nucleotide (pyr) operon by binding in a uridine-dependent manner to specific sites on pyr mRNA. This disrupts an antiterminator hairpin in the RNA and favors formation of a downstream transcription terminator, leading to a reduced expression of downstream genes. Functionally, also displays a weak uracil phosphoribosyltransferase activity which is not physiologically significant. This Ligilactobacillus salivarius (strain UCC118) (Lactobacillus salivarius) protein is Bifunctional protein PyrR.